Here is a 199-residue protein sequence, read N- to C-terminus: Ribonuclease HII (199 aa).

The 199-residue stretch at 1-199 folds into the RNase H type-2 domain; that stretch reads MCVCGIDEAG…TYKNLVQGHI (199 aa). D7, E8, and D97 together coordinate a divalent metal cation.

It belongs to the RNase HII family. The cofactor is Mn(2+). It depends on Mg(2+) as a cofactor.

Its subcellular location is the cytoplasm. The enzyme catalyses Endonucleolytic cleavage to 5'-phosphomonoester.. Its function is as follows. Endonuclease that specifically degrades the RNA of RNA-DNA hybrids. The polypeptide is Ribonuclease HII (Picrophilus torridus (strain ATCC 700027 / DSM 9790 / JCM 10055 / NBRC 100828 / KAW 2/3)).